A 354-amino-acid chain; its full sequence is Magnesium-protoporphyrin IX monomethyl ester [oxidative] cyclase 2 (354 aa).

This sequence belongs to the AcsF family. Fe cation serves as cofactor.

The enzyme catalyses Mg-protoporphyrin IX 13-monomethyl ester + 3 NADPH + 3 O2 + 2 H(+) = 3,8-divinyl protochlorophyllide a + 3 NADP(+) + 5 H2O. The protein operates within porphyrin-containing compound metabolism; chlorophyll biosynthesis (light-independent). Its function is as follows. Catalyzes the formation of the isocyclic ring in chlorophyll biosynthesis. Mediates the cyclase reaction, which results in the formation of divinylprotochlorophyllide (Pchlide) characteristic of all chlorophylls from magnesium-protoporphyrin IX 13-monomethyl ester (MgPMME). The chain is Magnesium-protoporphyrin IX monomethyl ester [oxidative] cyclase 2 from Thermosynechococcus vestitus (strain NIES-2133 / IAM M-273 / BP-1).